Reading from the N-terminus, the 1059-residue chain is Nonsense-mediated mRNA decay factor SMG7 (1059 aa).

TPR repeat units follow at residues 149–183 (DQQS…LGDL) and 184–217 (ARYK…WPAS). A compositionally biased stretch (polar residues) spans 806–817 (SHVSPAHSQSTS). Disordered stretches follow at residues 806-826 (SHVS…KWSP), 927-955 (HLGP…SGNN), 987-1015 (SGKP…QVPT), and 1040-1059 (STQL…RHFV).

As to quaternary structure, interacts with EXA1. In terms of tissue distribution, expressed in flowers and at lower levels in stems and leaves.

It is found in the cytoplasm. The protein resides in the P-body. Its function is as follows. Plays multiple roles in growth and development. Involved in nonsense-mediated mRNA decay (NMD). May provide a link to the mRNA degradation machinery to initiate NMD and serve as an adapter for UPF proteins function. Required for meiotic progression through anaphase II of pollen mother cells. May counteract cyclin-dependent kinase (CDK) activity at the end of meiosis. May play a role in plant defense through its involvement in NMD. Together with EXA1, helps to restrict cell death induction during pathogen infection in a salicylic acid- (SA) and reactive oxygen species- (ROS) independent manner. The sequence is that of Nonsense-mediated mRNA decay factor SMG7 from Arabidopsis thaliana (Mouse-ear cress).